The primary structure comprises 115 residues: T cell receptor beta variable 12-5 (115 aa).

Residues 1 to 21 (MATRLLCCVVLCLLGEELIDA) form the signal peptide. The Ig-like domain occupies 22-115 (RVTQTPRHKV…SAVYFCASGL (94 aa)). C42 and C111 are disulfide-bonded.

Alpha-beta TR is a heterodimer composed of an alpha and beta chain; disulfide-linked. The alpha-beta TR is associated with the transmembrane signaling CD3 coreceptor proteins to form the TR-CD3 (TcR or TCR). The assembly of alpha-beta TR heterodimers with CD3 occurs in the endoplasmic reticulum where a single alpha-beta TR heterodimer associates with one CD3D-CD3E heterodimer, one CD3G-CD3E heterodimer and one CD247 homodimer forming a stable octameric structure. CD3D-CD3E and CD3G-CD3E heterodimers preferentially associate with TR alpha and TR beta chains, respectively. The association of the CD247 homodimer is the last step of TcR assembly in the endoplasmic reticulum and is required for transport to the cell surface.

The protein localises to the cell membrane. Its function is as follows. V region of the variable domain of T cell receptor (TR) beta chain that participates in the antigen recognition. Alpha-beta T cell receptors are antigen specific receptors which are essential to the immune response and are present on the cell surface of T lymphocytes. Recognize peptide-major histocompatibility (MH) (pMH) complexes that are displayed by antigen presenting cells (APC), a prerequisite for efficient T cell adaptive immunity against pathogens. Binding of alpha-beta TR to pMH complex initiates TR-CD3 clustering on the cell surface and intracellular activation of LCK that phosphorylates the ITAM motifs of CD3G, CD3D, CD3E and CD247 enabling the recruitment of ZAP70. In turn ZAP70 phosphorylates LAT, which recruits numerous signaling molecules to form the LAT signalosome. The LAT signalosome propagates signal branching to three major signaling pathways, the calcium, the mitogen-activated protein kinase (MAPK) kinase and the nuclear factor NF-kappa-B (NF-kB) pathways, leading to the mobilization of transcription factors that are critical for gene expression and essential for T cell growth and differentiation. The T cell repertoire is generated in the thymus, by V-(D)-J rearrangement. This repertoire is then shaped by intrathymic selection events to generate a peripheral T cell pool of self-MH restricted, non-autoaggressive T cells. Post-thymic interaction of alpha-beta TR with the pMH complexes shapes TR structural and functional avidity. The protein is T cell receptor beta variable 12-5 of Homo sapiens (Human).